A 260-amino-acid chain; its full sequence is Proteasome subunit alpha (260 aa).

This sequence belongs to the peptidase T1A family. The 20S proteasome core is composed of 14 alpha and 14 beta subunits that assemble into four stacked heptameric rings, resulting in a barrel-shaped structure. The two inner rings, each composed of seven catalytic beta subunits, are sandwiched by two outer rings, each composed of seven alpha subunits. The catalytic chamber with the active sites is on the inside of the barrel. Has a gated structure, the ends of the cylinder being occluded by the N-termini of the alpha-subunits. Is capped at one or both ends by the proteasome regulatory ATPase, PAN.

It is found in the cytoplasm. With respect to regulation, the formation of the proteasomal ATPase PAN-20S proteasome complex, via the docking of the C-termini of PAN into the intersubunit pockets in the alpha-rings, triggers opening of the gate for substrate entry. Interconversion between the open-gate and close-gate conformations leads to a dynamic regulation of the 20S proteasome proteolysis activity. Its function is as follows. Component of the proteasome core, a large protease complex with broad specificity involved in protein degradation. This Thermococcus sp. (strain JCM 11816 / KS-1) protein is Proteasome subunit alpha.